Consider the following 164-residue polypeptide: Interferon gamma (164 aa).

The signal sequence occupies residues 1 to 19 (MTCQTYCLFVLSVIMIYFG). Residues N42, N61, and N95 are each glycosylated (N-linked (GlcNAc...) asparagine).

This sequence belongs to the type II (or gamma) interferon family. In terms of assembly, homodimer.

It localises to the secreted. Its function is as follows. Produced by lymphocytes activated by specific antigens or mitogens. IFN-gamma, in addition to having antiviral activity, has important immunoregulatory functions. It is a potent activator of macrophages, it has antiproliferative effects on transformed cells and it can potentiate the antiviral and antitumor effects of the type I interferons. The chain is Interferon gamma (IFNG) from Anas platyrhynchos (Mallard).